Here is a 104-residue protein sequence, read N- to C-terminus: Chromogranin-A (104 aa).

Cysteines 17 and 38 form a disulfide.

The protein belongs to the chromogranin/secretogranin protein family. Dimer.

It is found in the cytoplasmic vesicle. Its subcellular location is the secretory vesicle. It localises to the secreted. In terms of biological role, chromogranin A probably has a paracrine role in the regulation of secretion or maturation. This Struthio camelus (Common ostrich) protein is Chromogranin-A (CHGA).